The sequence spans 482 residues: UDP-N-acetylmuramate--L-alanine ligase (482 aa).

123-129 (GTHGKTT) is an ATP binding site.

The protein belongs to the MurCDEF family.

The protein resides in the cytoplasm. The catalysed reaction is UDP-N-acetyl-alpha-D-muramate + L-alanine + ATP = UDP-N-acetyl-alpha-D-muramoyl-L-alanine + ADP + phosphate + H(+). It participates in cell wall biogenesis; peptidoglycan biosynthesis. Cell wall formation. The chain is UDP-N-acetylmuramate--L-alanine ligase from Pseudomonas entomophila (strain L48).